The sequence spans 385 residues: Zinc finger protein B385R (385 aa).

2 C2H2-type zinc fingers span residues 166–190 (LQCPNCGCIQELMGTIFDETHFYNH) and 168–190 (CPNCGCIQELMGTIFDETHFYNH).

The protein belongs to the asfivirus B385R family.

The protein is Zinc finger protein B385R of African swine fever virus (isolate Tick/South Africa/Pretoriuskop Pr4/1996) (ASFV).